The chain runs to 550 residues: Chaperonin GroEL (550 aa).

Residues 30 to 33, K51, 87 to 91, G415, and D496 contribute to the ATP site; these read TLGP and DGTTT.

This sequence belongs to the chaperonin (HSP60) family. Forms a cylinder of 14 subunits composed of two heptameric rings stacked back-to-back. Interacts with the co-chaperonin GroES.

The protein resides in the cytoplasm. It carries out the reaction ATP + H2O + a folded polypeptide = ADP + phosphate + an unfolded polypeptide.. In terms of biological role, together with its co-chaperonin GroES, plays an essential role in assisting protein folding. The GroEL-GroES system forms a nano-cage that allows encapsulation of the non-native substrate proteins and provides a physical environment optimized to promote and accelerate protein folding. The protein is Chaperonin GroEL of Rickettsia typhi (strain ATCC VR-144 / Wilmington).